The sequence spans 199 residues: NADH-quinone oxidoreductase subunit B 2 (199 aa).

Residues Cys78, Cys79, Cys143, and Cys173 each contribute to the [4Fe-4S] cluster site.

The protein belongs to the complex I 20 kDa subunit family. In terms of assembly, NDH-1 is composed of 14 different subunits. Subunits NuoB, C, D, E, F, and G constitute the peripheral sector of the complex. It depends on [4Fe-4S] cluster as a cofactor.

It is found in the cell inner membrane. It carries out the reaction a quinone + NADH + 5 H(+)(in) = a quinol + NAD(+) + 4 H(+)(out). Its function is as follows. NDH-1 shuttles electrons from NADH, via FMN and iron-sulfur (Fe-S) centers, to quinones in the respiratory chain. The immediate electron acceptor for the enzyme in this species is believed to be ubiquinone. Couples the redox reaction to proton translocation (for every two electrons transferred, four hydrogen ions are translocated across the cytoplasmic membrane), and thus conserves the redox energy in a proton gradient. This is NADH-quinone oxidoreductase subunit B 2 from Rhodopseudomonas palustris (strain BisB5).